The primary structure comprises 265 residues: Cell adhesion molecule CEACAM7 (265 aa).

A signal peptide spans Met-1 to Gln-35. Residues Thr-36–Phe-142 enclose the Ig-like V-type domain. N-linked (GlcNAc...) asparagine glycans are attached at residues Asn-57, Asn-85, Asn-105, Asn-112, Asn-174, Asn-183, and Asn-198. One can recognise an Ig-like C2-type domain in the interval Pro-146 to Asn-233. A disulfide bridge links Cys-168 with Cys-216. Ser-242 carries the GPI-anchor amidated serine lipid modification. Positions Ser-243 to Ile-265 are cleaved as a propeptide — removed in mature form.

Belongs to the immunoglobulin superfamily. CEA family. As to quaternary structure, homodimer. Expressed in columnar epithelial cells of the colon (at protein level). Strongly down-regulated in colonic adenocarcinomas.

It localises to the cell membrane. It is found in the apical cell membrane. This is Cell adhesion molecule CEACAM7 from Homo sapiens (Human).